Here is a 135-residue protein sequence, read N- to C-terminus: Small ribosomal subunit protein uS12 (135 aa).

D89 carries the post-translational modification 3-methylthioaspartic acid. A disordered region spans residues 101-135 (SLDTSGVADRKQSRSKYGAKQPKAGAAAPAKGKGR). Residues 118–135 (GAKQPKAGAAAPAKGKGR) are compositionally biased toward low complexity.

This sequence belongs to the universal ribosomal protein uS12 family. As to quaternary structure, part of the 30S ribosomal subunit. Contacts proteins S8 and S17. May interact with IF1 in the 30S initiation complex.

With S4 and S5 plays an important role in translational accuracy. Functionally, interacts with and stabilizes bases of the 16S rRNA that are involved in tRNA selection in the A site and with the mRNA backbone. Located at the interface of the 30S and 50S subunits, it traverses the body of the 30S subunit contacting proteins on the other side and probably holding the rRNA structure together. The combined cluster of proteins S8, S12 and S17 appears to hold together the shoulder and platform of the 30S subunit. The chain is Small ribosomal subunit protein uS12 from Chlorobium limicola (strain DSM 245 / NBRC 103803 / 6330).